Consider the following 187-residue polypeptide: MKVTFITGNKHKLSEAEKIFHDTGIELEHADLGYPELQGTLEEVARYGAEHAARIMDGPVIVEDAGLFIRALKWFPGPYSAYVQDTIGNRGILKLMENVEDRYAEFRSAVGFCAPKSEPEVFLGVVKGRIGTEERGTRGFAFDPLFYPEGMDRSFGELSTIEKNRFSHRSRALKKFAQWYTENYEVI.

7–12 contributes to the substrate binding site; it reads TGNKHK. 2 residues coordinate Mg(2+): glutamate 36 and aspartate 64. Residue aspartate 64 is the Proton acceptor of the active site. Substrate is bound by residues alanine 65, 140-143, lysine 163, and 168-169; these read FAFD and HR.

Belongs to the HAM1 NTPase family. In terms of assembly, homodimer. The cofactor is Mg(2+).

It catalyses the reaction XTP + H2O = XMP + diphosphate + H(+). The enzyme catalyses dITP + H2O = dIMP + diphosphate + H(+). The catalysed reaction is ITP + H2O = IMP + diphosphate + H(+). In terms of biological role, pyrophosphatase that catalyzes the hydrolysis of nucleoside triphosphates to their monophosphate derivatives, with a high preference for the non-canonical purine nucleotides XTP (xanthosine triphosphate), dITP (deoxyinosine triphosphate) and ITP. Seems to function as a house-cleaning enzyme that removes non-canonical purine nucleotides from the nucleotide pool, thus preventing their incorporation into DNA/RNA and avoiding chromosomal lesions. This Methanothermobacter marburgensis (strain ATCC BAA-927 / DSM 2133 / JCM 14651 / NBRC 100331 / OCM 82 / Marburg) (Methanobacterium thermoautotrophicum) protein is dITP/XTP pyrophosphatase.